Here is a 486-residue protein sequence, read N- to C-terminus: Triplex capsid protein 1 (486 aa).

The protein belongs to the herpesviridae TRX1 protein family. In terms of assembly, interacts with TRX2, MCP and capsid vertex component 2/CVC2.

The protein resides in the virion. It is found in the host nucleus. Functionally, structural component of the T=16 icosahedral capsid. The capsid is composed of pentamers and hexamers of major capsid protein/MCP, which are linked together by heterotrimers called triplexes. These triplexes are formed by a single molecule of triplex protein 1/TRX1 and two copies of triplex protein 2/TRX2. Additionally, TRX1 is required for efficient transport of TRX2 to the nucleus, which is the site of capsid assembly. The chain is Triplex capsid protein 1 from Psittacid herpesvirus 1 (isolate Amazon parrot/-/97-0001/1997) (PsHV-1).